Here is a 138-residue protein sequence, read N- to C-terminus: MKHQRGYSLIEVIVAFALLALALTLLLGSLSGAARQVRGADDSTRATLHAQSLLAVQGMEQPLVPGQQQGSLEDGHFRWSLDVRPYDEPRRNAQAPVDPSAPTLLQLTLVVRWGEQPNQRLLWRTLRLVTATAQGNPA.

The propeptide at 1–6 (MKHQRG) is leader sequence. At Y7 the chain carries N-methyltyrosine. Residues 7 to 29 (YSLIEVIVAFALLALALTLLLGS) traverse the membrane as a helical segment.

It belongs to the GSP I family. Type II secretion is composed of four main components: the outer membrane complex, the inner membrane complex, the cytoplasmic secretion ATPase and the periplasm-spanning pseudopilus. Interacts with core component XpsG. Post-translationally, cleaved by prepilin peptidase. Methylated by prepilin peptidase at the amino group of the N-terminal tyrosine once the leader sequence is cleaved by prepilin peptidase.

It is found in the cell inner membrane. In terms of biological role, component of the type II secretion system required for the energy-dependent secretion of extracellular factors such as proteases and toxins from the periplasm. Part of the pseudopilus tip complex that is critical for the recognition and binding of secretion substrates. The sequence is that of Type II secretion system protein I (xpsI) from Xanthomonas campestris pv. campestris (strain ATCC 33913 / DSM 3586 / NCPPB 528 / LMG 568 / P 25).